A 165-amino-acid chain; its full sequence is Nucleotide-binding protein CFF8240_1664 (165 aa).

It belongs to the YajQ family.

Its function is as follows. Nucleotide-binding protein. The sequence is that of Nucleotide-binding protein CFF8240_1664 from Campylobacter fetus subsp. fetus (strain 82-40).